The following is a 503-amino-acid chain: ATP synthase subunit alpha (503 aa).

170 to 177 (GDRQTGKT) provides a ligand contact to ATP.

This sequence belongs to the ATPase alpha/beta chains family. In terms of assembly, F-type ATPases have 2 components, CF(1) - the catalytic core - and CF(0) - the membrane proton channel. CF(1) has five subunits: alpha(3), beta(3), gamma(1), delta(1), epsilon(1). CF(0) has three main subunits: a(1), b(2) and c(9-12). The alpha and beta chains form an alternating ring which encloses part of the gamma chain. CF(1) is attached to CF(0) by a central stalk formed by the gamma and epsilon chains, while a peripheral stalk is formed by the delta and b chains.

Its subcellular location is the cell inner membrane. It carries out the reaction ATP + H2O + 4 H(+)(in) = ADP + phosphate + 5 H(+)(out). Produces ATP from ADP in the presence of a proton gradient across the membrane. The alpha chain is a regulatory subunit. This Geobacter sulfurreducens (strain ATCC 51573 / DSM 12127 / PCA) protein is ATP synthase subunit alpha.